Consider the following 267-residue polypeptide: tRNA pseudouridine synthase A (267 aa).

The active-site Nucleophile is Asp-52. Tyr-110 lines the substrate pocket.

Belongs to the tRNA pseudouridine synthase TruA family. As to quaternary structure, homodimer.

The enzyme catalyses uridine(38/39/40) in tRNA = pseudouridine(38/39/40) in tRNA. In terms of biological role, formation of pseudouridine at positions 38, 39 and 40 in the anticodon stem and loop of transfer RNAs. The polypeptide is tRNA pseudouridine synthase A (Paraburkholderia phymatum (strain DSM 17167 / CIP 108236 / LMG 21445 / STM815) (Burkholderia phymatum)).